The primary structure comprises 148 residues: Transcriptional repressor NrdR (148 aa).

A zinc finger spans residues cysteine 3–cysteine 34. The ATP-cone domain maps to proline 49 to serine 139.

Belongs to the NrdR family. It depends on Zn(2+) as a cofactor.

Functionally, negatively regulates transcription of bacterial ribonucleotide reductase nrd genes and operons by binding to NrdR-boxes. The chain is Transcriptional repressor NrdR from Polynucleobacter necessarius subsp. necessarius (strain STIR1).